A 433-amino-acid polypeptide reads, in one-letter code: Pyrimidine-nucleoside phosphorylase (433 aa).

A phosphate-binding site is contributed by 81 to 83 (KHS). Residues glycine 88 and threonine 90 each contribute to the K(+) site. Residues threonine 92, 108–110 (KMS), and threonine 120 contribute to the phosphate site. 2 residues coordinate substrate: arginine 168 and lysine 187. Residues leucine 243, alanine 246, and glutamate 255 each coordinate K(+).

It belongs to the thymidine/pyrimidine-nucleoside phosphorylase family. As to quaternary structure, homodimer. K(+) serves as cofactor.

It catalyses the reaction uridine + phosphate = alpha-D-ribose 1-phosphate + uracil. The enzyme catalyses thymidine + phosphate = 2-deoxy-alpha-D-ribose 1-phosphate + thymine. It carries out the reaction 2'-deoxyuridine + phosphate = 2-deoxy-alpha-D-ribose 1-phosphate + uracil. Catalyzes phosphorolysis of the pyrimidine nucleosides uridine, thymidine and 2'-deoxyuridine with the formation of the corresponding pyrimidine base and ribose-1-phosphate. The sequence is that of Pyrimidine-nucleoside phosphorylase (pdp) from Staphylococcus haemolyticus (strain JCSC1435).